The primary structure comprises 282 residues: F-actin-capping protein subunit beta (282 aa).

The segment at 73-103 is disordered; it reads SPWSNQFDPPLDEAGSGGVGAGGNEGAGEGA. The segment covering 87–101 has biased composition (gly residues); sequence GSGGVGAGGNEGAGE.

Belongs to the F-actin-capping protein beta subunit family. As to quaternary structure, component of the F-actin capping complex, composed of a heterodimer of an alpha and a beta subunit.

The protein localises to the cytoplasm. The protein resides in the cytoskeleton. Its subcellular location is the actin patch. Functionally, F-actin-capping proteins bind in a Ca(2+)-independent manner to the fast growing ends of actin filaments (barbed end) thereby blocking the exchange of subunits at these ends. Unlike other capping proteins (such as gelsolin and severin), these proteins do not sever actin filaments. The polypeptide is F-actin-capping protein subunit beta (CAP2) (Gibberella zeae (strain ATCC MYA-4620 / CBS 123657 / FGSC 9075 / NRRL 31084 / PH-1) (Wheat head blight fungus)).